A 306-amino-acid chain; its full sequence is Acyl transferase (306 aa).

Active-site charge relay system residues include Ser117, Asp214, and His244.

It belongs to the LuxD family.

The protein operates within lipid metabolism; fatty acid reduction for biolumincescence. In terms of biological role, acyl transferase is part of the fatty acid reductase system required for aldehyde biosynthesis; it produces fatty acids for the luminescent reaction. The protein is Acyl transferase of Photobacterium phosphoreum.